The following is a 496-amino-acid chain: Adenosine transporter 1 (496 aa).

Topologically, residues 1 to 26 (MSSHTSTPNHASAAPPRKWYDMTSAE) are cytoplasmic. A helical membrane pass occupies residues 27-47 (FYVYVVAFMCGISMLMPINAV). Over 48–77 (FSAPSYMLQYYLYATKDPNHVPQMTNFWSN) the chain is Extracellular. The helical transmembrane segment at 78–98 (VMTYYNLIGLVTGLVMEPLTL) threads the bilayer. Residues 99–107 (LKSFRKIPM) lie on the Cytoplasmic side of the membrane. The helical transmembrane segment at 108–128 (LVRLLGGLCILIVEIIVLMAV) threads the bilayer. Residues 129 to 135 (PARGTTE) lie on the Extracellular side of the membrane. A helical transmembrane segment spans residues 136–156 (GGAVATMCIAGFIGGLGKSIF). The Cytoplasmic segment spans residues 157–172 (ESTVYGMFGAFPPSFT). Residues 173-193 (SIMMGGVGISGVLTSLIQIIV) form a helical membrane-spanning segment. Over 194–208 (KAALPDTYEGVKKQS) the chain is Extracellular. The helical transmembrane segment at 209 to 229 (YIYYSLDVGIQAATFIALIMM) threads the bilayer. At 230–336 (RFNSFAQLHF…SIISVLRSIK (107 aa)) the chain is on the cytoplasmic side. The chain crosses the membrane as a helical span at residues 337–357 (WMFVSCAFVFVVTLFLFPGIA). Residues 358 to 365 (TGMFPESK) are Extracellular-facing. The helical transmembrane segment at 366–386 (WFATVAVFIFNCCDVLGRVAP) threads the bilayer. Over 387 to 399 (ALRFMWPRSYNQR) the chain is Cytoplasmic. Residues 400–420 (WIIVAASFARVIFVPLLLLYS) traverse the membrane as a helical segment. Residues 421 to 431 (YHYIPSEAYGY) lie on the Extracellular side of the membrane. The chain crosses the membrane as a helical span at residues 432-452 (VIMVIFGFSSGYVASMSLTLG). Residues 453–464 (PQSKGIDNDGKR) are Cytoplasmic-facing. Residues 465–485 (FVAGTLMGISILVGGTIGTVL) form a helical membrane-spanning segment. The Extracellular portion of the chain corresponds to 486-496 (SIMTQTIREKY).

It belongs to the SLC29A/ENT transporter (TC 2.A.57) family.

The protein resides in the membrane. The enzyme catalyses adenosine(in) = adenosine(out). In terms of biological role, adenosine transporter. The protein is Adenosine transporter 1 of Crithidia fasciculata.